The chain runs to 963 residues: Ubiquitin carboxyl-terminal hydrolase 11 (963 aa).

The interval 64–93 (VTEDREPQHEELPGLDSQWRQIENGESGRE) is disordered. Positions 65-75 (TEDREPQHEEL) are enriched in basic and acidic residues. The DUSP domain occupies 76 to 184 (PGLDSQWRQI…GQPPIERKVI (109 aa)). Residue lysine 245 is modified to N6-acetyllysine. The region spanning 309 to 930 (CGLTNLGNTC…AAYVLFYQRQ (622 aa)) is the USP domain. The Nucleophile role is filled by cysteine 318. Disordered stretches follow at residues 644–691 (TKPN…SGVT) and 716–735 (LFTLQTVNSNGTSDRTTSPE). Serine 648 bears the Phosphoserine mark. Over residues 649–665 (DDEDDGDEKEDDEEDKD) the composition is skewed to acidic residues. The segment covering 717–731 (FTLQTVNSNGTSDRT) has biased composition (polar residues). The residue at position 733 (serine 733) is a Phosphoserine. Catalysis depends on histidine 888, which acts as the Proton acceptor. A compositionally biased stretch (low complexity) spans 938 to 957 (SPAGSSGAPASPACSSPPSS). Residues 938–963 (SPAGSSGAPASPACSSPPSSEFMDVN) are disordered. Serine 948 bears the Phosphoserine mark.

Belongs to the peptidase C19 family. Monomer. Associated component of the Polycomb group (PcG) multiprotein PRC1-like complex. Interacts with RANBP9/RANBPM. Interacts with BRCA2. Interacts with CHUK/IKKA. Interacts with NFKBIA. Interacts with SPRY3, RAE1, MYCBP2/PAM, and KCTD6. In terms of assembly, (Microbial infection) Interacts with papilloma virus protein 16E7.

The protein resides in the nucleus. It localises to the cytoplasm. Its subcellular location is the chromosome. The catalysed reaction is Thiol-dependent hydrolysis of ester, thioester, amide, peptide and isopeptide bonds formed by the C-terminal Gly of ubiquitin (a 76-residue protein attached to proteins as an intracellular targeting signal).. Protease that can remove conjugated ubiquitin from target proteins and polyubiquitin chains. Inhibits the degradation of target proteins by the proteasome. Cleaves preferentially 'Lys-6' and 'Lys-63'-linked ubiquitin chains. Has lower activity with 'Lys-11' and 'Lys-33'-linked ubiquitin chains, and extremely low activity with 'Lys-27', 'Lys-29' and 'Lys-48'-linked ubiquitin chains (in vitro). Plays a role in the regulation of pathways leading to NF-kappa-B activation. Plays a role in the regulation of DNA repair after double-stranded DNA breaks. Acts as a chromatin regulator via its association with the Polycomb group (PcG) multiprotein PRC1-like complex; may act by deubiquitinating components of the PRC1-like complex. Promotes cell proliferation by deubiquitinating phosphorylated E2F1. The polypeptide is Ubiquitin carboxyl-terminal hydrolase 11 (USP11) (Homo sapiens (Human)).